Reading from the N-terminus, the 65-residue chain is Large ribosomal subunit protein uL29 (65 aa).

This sequence belongs to the universal ribosomal protein uL29 family.

This Bacteroides fragilis (strain ATCC 25285 / DSM 2151 / CCUG 4856 / JCM 11019 / LMG 10263 / NCTC 9343 / Onslow / VPI 2553 / EN-2) protein is Large ribosomal subunit protein uL29.